The primary structure comprises 1361 residues: Rho guanine nucleotide exchange factor 18 (1361 aa).

3 disordered regions span residues 33–88 (LQDL…SCSE), 131–156 (SGGGTPAESPGKECDSPKKRGRSRSV), and 244–292 (DGAG…ARER). Positions 50–61 (PDSRPTGEEPGR) are enriched in basic and acidic residues. A compositionally biased stretch (polar residues) spans 64–73 (LFSSLAGSQD). Basic and acidic residues predominate over residues 74 to 88 (LSRRRSWERSRSCSE). Basic and acidic residues-rich tracts occupy residues 245–256 (GAGKNEKSDKST) and 271–292 (RQKEKGKSPAHLKDKGQDARER). The C2H2-type; degenerate zinc finger occupies 310 to 334 (SSCPLCGKPFLSSASLKEHPRGTLL). The segment at 348 to 368 (TVSQKGGPQPTPSPAGPGTQL) is disordered. The region spanning 447–644 (KRQDVLYELM…KDIISQVDAK (198 aa)) is the DH domain. The PH domain maps to 684–786 (QLHLEGMLCW…WMAHIQRAVE (103 aa)). Disordered stretches follow at residues 893–980 (ANGQ…DPRL), 1143–1211 (LKKQ…RLAK), 1229–1264 (AAVQQQIPTKLAASTKGGKDKGGKSRGSQRWESSAS), and 1277–1361 (MGKD…VIFF). Thr-912 carries the post-translational modification Phosphothreonine. Ser-921 carries the post-translational modification Phosphoserine. Positions 1038 to 1148 (LEQERQRNFE…LLRRLKKQNT (111 aa)) form a coiled coil. Residues 1191–1211 (YAERPEVARRDSAPTENRLAK) are compositionally biased toward basic and acidic residues. The segment covering 1254–1264 (RGSQRWESSAS) has biased composition (polar residues). 2 positions are modified to phosphoserine: Ser-1289 and Ser-1291. 2 stretches are compositionally biased toward pro residues: residues 1300–1317 (PAPPPDPGFPAPSPPPAD) and 1334–1344 (PGPPAPSPLPA). The segment covering 1349-1361 (AKEDASKEDVIFF) has biased composition (basic and acidic residues).

Interacts with SEPT9; the interaction may inhibit GEF activity. Interacts with Gbetagamma subunits GNB1 and GNG2. Interacts with EPB41L4B. Interacts with PATJ (via C-terminus). As to expression, expressed in all tissues tested with highest expression in kidney and pancreas. Weakly or not expressed in liver, skeletal muscle and testis. Isoform 1: Expressed in eosinophils. Isoform 2: Expressed in eosinophils. Isoform 3: Expressed in eosinophils. Isoform 4: Not detected in eosinophils.

Its subcellular location is the cytoplasm. It localises to the cytoskeleton. It is found in the cell membrane. The protein resides in the apical cell membrane. Its function is as follows. Acts as a guanine nucleotide exchange factor (GEF) for RhoA GTPases. Its activation induces formation of actin stress fibers. Also acts as a GEF for RAC1, inducing production of reactive oxygen species (ROS). Does not act as a GEF for CDC42. The G protein beta-gamma (Gbetagamma) subunits of heterotrimeric G proteins act as activators, explaining the integrated effects of LPA and other G-protein coupled receptor agonists on actin stress fiber formation, cell shape change and ROS production. Required for EPB41L4B-mediated regulation of the circumferential actomyosin belt in epithelial cells. This Homo sapiens (Human) protein is Rho guanine nucleotide exchange factor 18 (ARHGEF18).